The chain runs to 517 residues: Ribonuclease Y (517 aa).

The helical transmembrane segment at 1–21 (MIESLIALIAAIVGLGIGYLV) threads the bilayer. One can recognise a KH domain in the interval 207–273 (LINVINIKND…TKVIELLVED (67 aa)). In terms of domain architecture, HD spans 333-426 (ALAHSLEVAH…VCAADTLSAA (94 aa)).

It belongs to the RNase Y family.

It localises to the cell membrane. In terms of biological role, endoribonuclease that initiates mRNA decay. This chain is Ribonuclease Y, found in Campylobacter jejuni subsp. jejuni serotype O:23/36 (strain 81-176).